Here is a 72-residue protein sequence, read N- to C-terminus: NAD(P)H-quinone oxidoreductase subunit O (72 aa).

Belongs to the complex I NdhO subunit family. As to quaternary structure, NDH-1 can be composed of about 15 different subunits; different subcomplexes with different compositions have been identified which probably have different functions.

It is found in the cellular thylakoid membrane. The catalysed reaction is a plastoquinone + NADH + (n+1) H(+)(in) = a plastoquinol + NAD(+) + n H(+)(out). It catalyses the reaction a plastoquinone + NADPH + (n+1) H(+)(in) = a plastoquinol + NADP(+) + n H(+)(out). In terms of biological role, NDH-1 shuttles electrons from an unknown electron donor, via FMN and iron-sulfur (Fe-S) centers, to quinones in the respiratory and/or the photosynthetic chain. The immediate electron acceptor for the enzyme in this species is believed to be plastoquinone. Couples the redox reaction to proton translocation, and thus conserves the redox energy in a proton gradient. Cyanobacterial NDH-1 also plays a role in inorganic carbon-concentration. The polypeptide is NAD(P)H-quinone oxidoreductase subunit O (Gloeothece citriformis (strain PCC 7424) (Cyanothece sp. (strain PCC 7424))).